We begin with the raw amino-acid sequence, 186 residues long: Ribosome-recycling factor (186 aa).

This sequence belongs to the RRF family.

It is found in the cytoplasm. In terms of biological role, responsible for the release of ribosomes from messenger RNA at the termination of protein biosynthesis. May increase the efficiency of translation by recycling ribosomes from one round of translation to another. This Albidiferax ferrireducens (strain ATCC BAA-621 / DSM 15236 / T118) (Rhodoferax ferrireducens) protein is Ribosome-recycling factor.